The chain runs to 91 residues: ATP synthase subunit c (91 aa).

Helical transmembrane passes span 4–24 (FTMC…GTGI) and 53–73 (IGLA…LIIL).

Belongs to the ATPase C chain family. As to quaternary structure, F-type ATPases have 2 components, F(1) - the catalytic core - and F(0) - the membrane proton channel. F(1) has five subunits: alpha(3), beta(3), gamma(1), delta(1), epsilon(1). F(0) has three main subunits: a(1), b(2) and c(10-14). The alpha and beta chains form an alternating ring which encloses part of the gamma chain. F(1) is attached to F(0) by a central stalk formed by the gamma and epsilon chains, while a peripheral stalk is formed by the delta and b chains.

The protein localises to the cell inner membrane. Its function is as follows. F(1)F(0) ATP synthase produces ATP from ADP in the presence of a proton or sodium gradient. F-type ATPases consist of two structural domains, F(1) containing the extramembraneous catalytic core and F(0) containing the membrane proton channel, linked together by a central stalk and a peripheral stalk. During catalysis, ATP synthesis in the catalytic domain of F(1) is coupled via a rotary mechanism of the central stalk subunits to proton translocation. In terms of biological role, key component of the F(0) channel; it plays a direct role in translocation across the membrane. A homomeric c-ring of between 10-14 subunits forms the central stalk rotor element with the F(1) delta and epsilon subunits. The chain is ATP synthase subunit c from Geotalea daltonii (strain DSM 22248 / JCM 15807 / FRC-32) (Geobacter daltonii).